A 601-amino-acid chain; its full sequence is Glutamyl-tRNA(Gln) amidotransferase subunit B, mitochondrial (601 aa).

A mitochondrion-targeting transit peptide spans 1–52; the sequence is MLQQWLRQSPRAARVLRGSCCRGPQSGSLRHSPLPTAPHRCIRSLQTSATES.

The protein belongs to the GatB/GatE family. GatB subfamily. As to quaternary structure, subunit of the heterotrimeric GatCAB amidotransferase (AdT) complex, composed of A, B and C subunits.

Its subcellular location is the mitochondrion. The catalysed reaction is L-glutamyl-tRNA(Gln) + L-glutamine + ATP + H2O = L-glutaminyl-tRNA(Gln) + L-glutamate + ADP + phosphate + H(+). Functionally, allows the formation of correctly charged Gln-tRNA(Gln) through the transamidation of misacylated Glu-tRNA(Gln) in the mitochondria. The reaction takes place in the presence of glutamine and ATP through an activated gamma-phospho-Glu-tRNA(Gln). The protein is Glutamyl-tRNA(Gln) amidotransferase subunit B, mitochondrial of Aspergillus fumigatus (strain ATCC MYA-4609 / CBS 101355 / FGSC A1100 / Af293) (Neosartorya fumigata).